Consider the following 106-residue polypeptide: L-rhamnose mutarotase (106 aa).

Tyr20 contacts substrate. His24 serves as the catalytic Proton donor. Substrate is bound by residues Tyr43 and 78 to 79 (WW).

Belongs to the rhamnose mutarotase family. As to quaternary structure, homodimer.

The protein resides in the cytoplasm. The catalysed reaction is alpha-L-rhamnose = beta-L-rhamnose. The protein operates within carbohydrate metabolism; L-rhamnose metabolism. Functionally, involved in the anomeric conversion of L-rhamnose. The sequence is that of L-rhamnose mutarotase from Brucella anthropi (strain ATCC 49188 / DSM 6882 / CCUG 24695 / JCM 21032 / LMG 3331 / NBRC 15819 / NCTC 12168 / Alc 37) (Ochrobactrum anthropi).